The following is a 76-amino-acid chain: Sec-independent protein translocase protein TatA (76 aa).

The chain crosses the membrane as a helical span at residues 1 to 21; it reads MGSFSIWHWLVVLAIVVLVFG. Residues 41–76 form a disordered region; that stretch reads EGMKGAEEESTPPPPAQQVTGHSIKSEIEEKDQTKV. The span at 64–76 shows a compositional bias: basic and acidic residues; sequence IKSEIEEKDQTKV.

The protein belongs to the TatA/E family. As to quaternary structure, the Tat system comprises two distinct complexes: a TatABC complex, containing multiple copies of TatA, TatB and TatC subunits, and a separate TatA complex, containing only TatA subunits. Substrates initially bind to the TatABC complex, which probably triggers association of the separate TatA complex to form the active translocon.

It is found in the cell inner membrane. In terms of biological role, part of the twin-arginine translocation (Tat) system that transports large folded proteins containing a characteristic twin-arginine motif in their signal peptide across membranes. TatA could form the protein-conducting channel of the Tat system. In Nitrosomonas europaea (strain ATCC 19718 / CIP 103999 / KCTC 2705 / NBRC 14298), this protein is Sec-independent protein translocase protein TatA.